Here is a 270-residue protein sequence, read N- to C-terminus: Extracellular metalloprotease MCYG_04966 (270 aa).

Positions 1 to 19 (MRLSLFLSGLAAAGSIVSA) are cleaved as a signal peptide. Asn135 carries an N-linked (GlcNAc...) asparagine glycan. His184 serves as a coordination point for Zn(2+). The active site involves Glu185. His188 provides a ligand contact to Zn(2+). Asn199 is a glycosylation site (N-linked (GlcNAc...) asparagine). The interval 208–227 (VADTPPQSKKTSGCPNSQDS) is disordered. Positions 212–227 (PPQSKKTSGCPNSQDS) are enriched in polar residues. Cys221 and Cys247 are joined by a disulfide.

It belongs to the peptidase M43B family.

It localises to the secreted. Secreted metalloproteinase that allows assimilation of proteinaceous substrates. Plays a pivotal role as a pathogenicity determinant during infections and contributes to the ability of the pathogen to persist within the mammalian host. This Arthroderma otae (strain ATCC MYA-4605 / CBS 113480) (Microsporum canis) protein is Extracellular metalloprotease MCYG_04966.